We begin with the raw amino-acid sequence, 379 residues long: MTDVDKKDPQYKQIFLERFRKKLQSDKTGMSDLESFVELPEGITPVAASIGPIKRGSEPLPPWLKLNVPKGMTHRPRFNRIRRSMREKKLSTVCEEAKCPNIGECWGGGEDNGAATATIMVMGSHCTRGCRFCSVLTSRRPPPLDPDEPEKVAAAVHEMGVDYIVMTMVDRDDLPDGGASHVSRCIRTIKEQNPELMLEALVGDFHGDLKVVEQLAATPLSVYAHNIECVERITPRVRDHRATYKQSLQTLEHVTKWTNGKMLTKSSIMLGLGEEEEEVRQTLRDLRTAGVSAVTLGQYLQPSRTRLKVSRYAHPKEFEMWEKEAMSMGFLYCASGPMVRSSYRAGEYYIKNIVKQRENAKGATTMEAVTAADAVAAGA.

Cys-94, Cys-99, Cys-105, Cys-126, Cys-130, Cys-133, and Ser-342 together coordinate [4Fe-4S] cluster. Residues 109–331 (GEDNGAATAT…EKEAMSMGFL (223 aa)) enclose the Radical SAM core domain.

This sequence belongs to the radical SAM superfamily. Lipoyl synthase family. [4Fe-4S] cluster is required as a cofactor.

The protein resides in the mitochondrion. It catalyses the reaction [[Fe-S] cluster scaffold protein carrying a second [4Fe-4S](2+) cluster] + N(6)-octanoyl-L-lysyl-[protein] + 2 oxidized [2Fe-2S]-[ferredoxin] + 2 S-adenosyl-L-methionine + 4 H(+) = [[Fe-S] cluster scaffold protein] + N(6)-[(R)-dihydrolipoyl]-L-lysyl-[protein] + 4 Fe(3+) + 2 hydrogen sulfide + 2 5'-deoxyadenosine + 2 L-methionine + 2 reduced [2Fe-2S]-[ferredoxin]. It functions in the pathway protein modification; protein lipoylation via endogenous pathway; protein N(6)-(lipoyl)lysine from octanoyl-[acyl-carrier-protein]: step 2/2. Functionally, catalyzes the radical-mediated insertion of two sulfur atoms into the C-6 and C-8 positions of the octanoyl moiety bound to the lipoyl domains of lipoate-dependent enzymes, thereby converting the octanoylated domains into lipoylated derivatives. This chain is Lipoyl synthase, mitochondrial, found in Leishmania braziliensis.